The primary structure comprises 202 residues: Large ribosomal subunit protein bL25 (202 aa).

Belongs to the bacterial ribosomal protein bL25 family. CTC subfamily. As to quaternary structure, part of the 50S ribosomal subunit; part of the 5S rRNA/L5/L18/L25 subcomplex. Contacts the 5S rRNA. Binds to the 5S rRNA independently of L5 and L18.

Its function is as follows. This is one of the proteins that binds to the 5S RNA in the ribosome where it forms part of the central protuberance. This Corynebacterium efficiens (strain DSM 44549 / YS-314 / AJ 12310 / JCM 11189 / NBRC 100395) protein is Large ribosomal subunit protein bL25.